We begin with the raw amino-acid sequence, 214 residues long: Cytochrome b (214 aa).

The next 4 helical transmembrane spans lie at phenylalanine 31–isoleucine 51, tryptophan 75–isoleucine 96, tryptophan 111–leucine 131, and phenylalanine 176–leucine 196. Heme b-binding residues include histidine 81 and histidine 95. 2 residues coordinate heme b: histidine 180 and histidine 194. Histidine 199 contacts a ubiquinone.

This sequence belongs to the cytochrome b family. The cytochrome bc1 complex contains 3 respiratory subunits (MT-CYB, CYC1 and UQCRFS1), 2 core proteins (UQCRC1 and UQCRC2) and probably 6 low-molecular weight proteins. Heme b serves as cofactor.

The protein resides in the mitochondrion inner membrane. Component of the ubiquinol-cytochrome c reductase complex (complex III or cytochrome b-c1 complex) that is part of the mitochondrial respiratory chain. The b-c1 complex mediates electron transfer from ubiquinol to cytochrome c. Contributes to the generation of a proton gradient across the mitochondrial membrane that is then used for ATP synthesis. This Trimeresurus stejnegeri (Chinese green tree viper) protein is Cytochrome b (MT-CYB).